The sequence spans 153 residues: MTHDNKLQVEAIKRGTVIDHIPAQIGFKLLSLFKLTETDQRITIGLNLPSGEMGRKDLIKIENTFLSEDQVDQLALYAPQATVNRIDNYEVVGKSRPSLPERIDNVLVCPNSNCISHAEPVSSSFAVRKRANDIALKCKYCEKEFSHNVVLAN.

The Zn(2+) site is built by Cys109, Cys114, Cys138, and Cys141.

This sequence belongs to the PyrI family. In terms of assembly, contains catalytic and regulatory chains. Zn(2+) is required as a cofactor.

Its function is as follows. Involved in allosteric regulation of aspartate carbamoyltransferase. The sequence is that of Aspartate carbamoyltransferase regulatory chain from Escherichia coli (strain ATCC 8739 / DSM 1576 / NBRC 3972 / NCIMB 8545 / WDCM 00012 / Crooks).